The primary structure comprises 268 residues: Probable intron-encoded DNA endonuclease 1 (268 aa).

This sequence belongs to the LAGLIDADG endonuclease family.

It is found in the mitochondrion. Functionally, mitochondrial DNA endonuclease involved in intron homing. The chain is Probable intron-encoded DNA endonuclease 1 (hegI1) from Mycosarcoma maydis (Corn smut fungus).